A 184-amino-acid chain; its full sequence is Signal peptidase complex subunit 3 (184 aa).

Over 1–14 (MFSFVQRFQNVSNQ) the chain is Cytoplasmic. A helical; Signal-anchor for type II membrane protein transmembrane segment spans residues 15–35 (AFSMGIVMVVFIMASSYYQLI). Topologically, residues 36–184 (NNNAFSVPSN…TLTVENKNKV (149 aa)) are lumenal. N102 and N173 each carry an N-linked (GlcNAc...) asparagine glycan.

Belongs to the SPCS3 family. As to quaternary structure, component of the signal peptidase complex (SPC) composed of a catalytic subunit SEC11 and three accessory subunits SPC1, SPC2 and SPC3. The complex induces a local thinning of the ER membrane which is used to measure the length of the signal peptide (SP) h-region of protein substrates. This ensures the selectivity of the complex towards h-regions shorter than 18-20 amino acids. Interacts with SEC11. SPC associates with the translocon complex.

It localises to the endoplasmic reticulum membrane. Its function is as follows. Essential component of the signal peptidase complex (SPC) which catalyzes the cleavage of N-terminal signal sequences from nascent proteins as they are translocated into the lumen of the endoplasmic reticulum. Essential for the SPC catalytic activity, possibly by stabilizing and positioning the active center of the complex close to the lumenal surface. Essential for viability. The chain is Signal peptidase complex subunit 3 (SPC3) from Saccharomyces cerevisiae (strain ATCC 204508 / S288c) (Baker's yeast).